Here is a 506-residue protein sequence, read N- to C-terminus: (+)-vincadifformine 19-hydroxylase (506 aa).

Residues 1 to 4 (MELD) lie on the Lumenal side of the membrane. Residues 5–25 (ECSPSIFIISFIFIAISIAIL) traverse the membrane as a helical segment. Topologically, residues 26 to 506 (RRIRPKKTKA…DLHLIPTSYM (481 aa)) are cytoplasmic. Cys450 is a heme binding site.

Belongs to the cytochrome P450 family. It depends on heme as a cofactor. In terms of tissue distribution, accumulates progressively in roots.

Its subcellular location is the endoplasmic reticulum membrane. It carries out the reaction (+)-vincadifformine + reduced [NADPH--hemoprotein reductase] + O2 = (+)-minovincinine + oxidized [NADPH--hemoprotein reductase] + H2O + H(+). It participates in alkaloid biosynthesis. Its activity is regulated as follows. The enantiomer (-)-vincadifformine acts as a competitive inhibitor. Its function is as follows. Component of the monoterpenoid indole alkaloids (MIAs, e.g. echitovenine, tabersonine, lochnericine, 19-hydroxytabersonine and horhammericine) biosynthetic pathway; MIAs are used in cancer treatment and other medical applications. Cytochrome P450 catalyzing the hydroxylation of (+)-vincadifformine to (+)-minovincinine. This is (+)-vincadifformine 19-hydroxylase from Catharanthus roseus (Madagascar periwinkle).